The following is a 500-amino-acid chain: L-arabinose isomerase (500 aa).

Mn(2+)-binding residues include Glu-306, Glu-333, His-350, and His-450.

The protein belongs to the arabinose isomerase family. As to quaternary structure, homohexamer. The cofactor is Mn(2+).

It catalyses the reaction beta-L-arabinopyranose = L-ribulose. Its pathway is carbohydrate degradation; L-arabinose degradation via L-ribulose; D-xylulose 5-phosphate from L-arabinose (bacterial route): step 1/3. Its function is as follows. Catalyzes the conversion of L-arabinose to L-ribulose. This chain is L-arabinose isomerase, found in Escherichia coli (strain 55989 / EAEC).